The primary structure comprises 706 residues: Elongation factor G (706 aa).

Residues 8–295 (ERYRNFGIMA…AVIDYLPSPL (288 aa)) form the tr-type G domain. GTP is bound by residues 17–24 (AHIDAGKT), 92–96 (DTPGH), and 146–149 (NKMD).

The protein belongs to the TRAFAC class translation factor GTPase superfamily. Classic translation factor GTPase family. EF-G/EF-2 subfamily.

The protein localises to the cytoplasm. In terms of biological role, catalyzes the GTP-dependent ribosomal translocation step during translation elongation. During this step, the ribosome changes from the pre-translocational (PRE) to the post-translocational (POST) state as the newly formed A-site-bound peptidyl-tRNA and P-site-bound deacylated tRNA move to the P and E sites, respectively. Catalyzes the coordinated movement of the two tRNA molecules, the mRNA and conformational changes in the ribosome. This chain is Elongation factor G, found in Jannaschia sp. (strain CCS1).